The following is a 222-amino-acid chain: V-type ATP synthase subunit D (222 aa).

Belongs to the V-ATPase D subunit family.

In terms of biological role, produces ATP from ADP in the presence of a proton gradient across the membrane. The protein is V-type ATP synthase subunit D of Acetivibrio thermocellus (strain ATCC 27405 / DSM 1237 / JCM 9322 / NBRC 103400 / NCIMB 10682 / NRRL B-4536 / VPI 7372) (Clostridium thermocellum).